The following is a 166-amino-acid chain: Sec-independent protein translocase protein TatB (166 aa).

A helical transmembrane segment spans residues 2-22; sequence FNDIGALELLTLGVLAVLVFG. A disordered region spans residues 110-166; the sequence is TPAASDTANSAVNGSAGAAADGVTTSLTKTGETTPDLLKKAPQQAQPERPPFDADAT. Low complexity predominate over residues 117–129; that stretch reads ANSAVNGSAGAAA. Over residues 132–142 the composition is skewed to polar residues; it reads VTTSLTKTGET.

The protein belongs to the TatB family. In terms of assembly, the Tat system comprises two distinct complexes: a TatABC complex, containing multiple copies of TatA, TatB and TatC subunits, and a separate TatA complex, containing only TatA subunits. Substrates initially bind to the TatABC complex, which probably triggers association of the separate TatA complex to form the active translocon.

The protein localises to the cell membrane. Functionally, part of the twin-arginine translocation (Tat) system that transports large folded proteins containing a characteristic twin-arginine motif in their signal peptide across membranes. Together with TatC, TatB is part of a receptor directly interacting with Tat signal peptides. TatB may form an oligomeric binding site that transiently accommodates folded Tat precursor proteins before their translocation. This is Sec-independent protein translocase protein TatB from Streptomyces griseus subsp. griseus (strain JCM 4626 / CBS 651.72 / NBRC 13350 / KCC S-0626 / ISP 5235).